Reading from the N-terminus, the 113-residue chain is uncharacterized protein (113 aa).

Residues 16–113 enclose the HTH hxlR-type domain; sequence TPFGYTLSLI…CEWGVKNQNN (98 aa).

This is an uncharacterized protein from Halalkalibacterium halodurans (strain ATCC BAA-125 / DSM 18197 / FERM 7344 / JCM 9153 / C-125) (Bacillus halodurans).